We begin with the raw amino-acid sequence, 151 residues long: Deoxyuridine 5'-triphosphate nucleotidohydrolase (151 aa).

Substrate contacts are provided by residues 71 to 73 (RSG), Asn-84, and 88 to 90 (TID).

This sequence belongs to the dUTPase family. Mg(2+) is required as a cofactor.

The enzyme catalyses dUTP + H2O = dUMP + diphosphate + H(+). It functions in the pathway pyrimidine metabolism; dUMP biosynthesis; dUMP from dCTP (dUTP route): step 2/2. In terms of biological role, this enzyme is involved in nucleotide metabolism: it produces dUMP, the immediate precursor of thymidine nucleotides and it decreases the intracellular concentration of dUTP so that uracil cannot be incorporated into DNA. This is Deoxyuridine 5'-triphosphate nucleotidohydrolase from Gluconobacter oxydans (strain 621H) (Gluconobacter suboxydans).